The chain runs to 292 residues: 1D-myo-inositol 2-acetamido-2-deoxy-alpha-D-glucopyranoside deacetylase (292 aa).

Zn(2+) is bound by residues His-11, Asp-14, and His-146.

This sequence belongs to the MshB deacetylase family. Zn(2+) is required as a cofactor.

It catalyses the reaction 1D-myo-inositol 2-acetamido-2-deoxy-alpha-D-glucopyranoside + H2O = 1D-myo-inositol 2-amino-2-deoxy-alpha-D-glucopyranoside + acetate. Functionally, catalyzes the deacetylation of 1D-myo-inositol 2-acetamido-2-deoxy-alpha-D-glucopyranoside (GlcNAc-Ins) in the mycothiol biosynthesis pathway. This Acidothermus cellulolyticus (strain ATCC 43068 / DSM 8971 / 11B) protein is 1D-myo-inositol 2-acetamido-2-deoxy-alpha-D-glucopyranoside deacetylase.